A 548-amino-acid chain; its full sequence is MYEEEIKKIALLNAYQHNGKAELKSVIGKVMAEIADLRKNPKLVSELAKAAVDSVNSMSKDDIVNIVEKQFPEALKKDKKPEEHRLPDLQGVNGHVVMRLAPSPSGPLHIGHTRMAILNDEYVKRYGGDLILRIEDTNPTNIDPEAYAMIPEDLEWLGVNVTKTVIQSERFDLYYSVAKKLIENGHLYICTCDREEFKRKKLASIPCKDRDNPPETNLYLFEKMLDGEIKAGAAVAVMKTDLNHPNPSVRDWIAFRIIDAKHPRTGDKYRVFPMMSFSVAVDDHYLGLTHVLRGKDQLTNTEKQRYVFEYNGWNKPYYYHYGMIRFPGTRLKTSLMKKGIQAGQYDGWSDVRLGTVRAMARRGYQPETFRRYWINSGLREIDAVFSWEIFNSLNREFVDPKAYRFSFTKDPVEIKMEGSNGLTARLPYHPSHPEYGVRKYEIGDTVYISKGDADKIADGERFRLKDLCYVVRKGDRFLFDGTEMKEKTKIINWCPPNSREFQVLKPDGSIDKGLIEPASKGYRGISQLERYGYVNFYDSDEKAYFTHD.

Residues 102–112 (PSPSGPLHIGH) carry the 'HIGH' region motif.

It belongs to the class-I aminoacyl-tRNA synthetase family. Glutamate--tRNA ligase type 2 subfamily.

It localises to the cytoplasm. It carries out the reaction tRNA(Glu) + L-glutamate + ATP = L-glutamyl-tRNA(Glu) + AMP + diphosphate. Its function is as follows. Catalyzes the attachment of glutamate to tRNA(Glu) in a two-step reaction: glutamate is first activated by ATP to form Glu-AMP and then transferred to the acceptor end of tRNA(Glu). In Thermoplasma volcanium (strain ATCC 51530 / DSM 4299 / JCM 9571 / NBRC 15438 / GSS1), this protein is Glutamate--tRNA ligase.